The following is a 37-amino-acid chain: Large ribosomal subunit protein bL36 (37 aa).

It belongs to the bacterial ribosomal protein bL36 family.

In Thermobifida fusca (strain YX), this protein is Large ribosomal subunit protein bL36.